Reading from the N-terminus, the 57-residue chain is Small hydrophobic protein (57 aa).

Over 1 to 8 the chain is Virion surface; it reads MPAIQPPL. Residues 9–29 form a helical membrane-spanning segment; the sequence is YLTFLLLTLLYLIITLYVWTI. Topologically, residues 30-57 are intravirion; that stretch reads LTINHNTAVRYAALYQRSFSRWGFDQSL.

Belongs to the rubulavirus small hydrophobic protein family. In terms of assembly, interacts with host TNFRSF1A, RIPK1 and IRAK1; these interactions interfere with host NF-kappa-B activation at the level of receptor complexes. Interacts with host protein UBQLN4.

It is found in the virion membrane. Its subcellular location is the host cell membrane. Its function is as follows. Plays a role in the inhibition of the host NF-kappa-B pathway. This inhibition occurs at the receptor level, by preventing the signaling of TNFR1 as well as IL-1R and TLR3. The polypeptide is Small hydrophobic protein (SH) (Mumps virus genotype A (strain Jeryl-Lynn) (MuV)).